The chain runs to 506 residues: TOM1-like protein 3 (506 aa).

The region spanning 12 to 141 (ATNDMLIGPD…ELRSAGIEFP (130 aa)) is the VHS domain. A GAT domain is found at 180 to 268 (DASALSMEEI…VLQHHDDKAK (89 aa)). 3 disordered regions span residues 266–328 (KAKG…PPSS), 351–384 (ETFENVKPPSTSQSSNHDYSAPIFDEPVPQSKSP), and 398–477 (EQLP…PEDI). Positions 288–298 (DDDDDESDDDF) are enriched in acidic residues. Serine 294 carries the post-translational modification Phosphoserine. Residues 358 to 368 (PPSTSQSSNHD) are compositionally biased toward polar residues. Serine 383 bears the Phosphoserine mark. Over residues 450–460 (QSRNLSLNPTA) the composition is skewed to polar residues. The span at 468–477 (PKKDDKPEDI) shows a compositional bias: basic and acidic residues.

It belongs to the TOM1 family. As to expression, preferentially expressed in cauline leaves.

The protein resides in the membrane. Its function is as follows. Might contribute to the loading of the ESCRT machinery. In Arabidopsis thaliana (Mouse-ear cress), this protein is TOM1-like protein 3.